The chain runs to 315 residues: Protein sprouty homolog 2 (315 aa).

Positions 1 to 15 (MEARAQSGNGSQPLL) are enriched in polar residues. Disordered stretches follow at residues 1–39 (MEAR…QQVH) and 51–140 (NTNE…GSSF). Basic and acidic residues predominate over residues 20 to 32 (DGGRQRGEPDPRD). A compositionally biased stretch (low complexity) spans 108 to 140 (SRSISTVSSGSRSSTRTSTSSSSSEQRLLGSSF). Residues 118–315 (SRSSTRTSTS…VPPRNFEKPT (198 aa)) form a required for interaction with CAV1 region. The SPR domain occupies 177–291 (RCEDCGKCKC…CYDRVNRPGC (115 aa)). Residues 178–315 (CEDCGKCKCK…VPPRNFEKPT (138 aa)) are required for interaction with TESK1.

It belongs to the sprouty family. Forms heterodimers with SPRY1. Forms a tripartite complex containing GAB1, METTL13 and SPRY2. Within the complex interacts with METTL13. Interacts with RAF1. Interacts (via C-terminus) with TESK1 (via C-terminus); the interaction disrupts SPRY2 interaction with GRB2, potentially via disruption of SPRY2 serine dephosphorylation. Interacts with PPP2R1A/PP2A-A and PPP2CA/PP2A-C; the interaction with PPP2CA/PP2A-C is inhibited by interaction with TESK1, possibly by vesicular sequestration of SPRY2. Inhibition of the interaction with the serine/threonine-protein phosphatase 2A (PP2A) holoenzyme results in loss of PP2A-mediated dephosphorylation, resulting in the loss of SPRY2 interaction with GRB2. Interacts with GRB2. Interacts with CBL/C-CBL; the interaction inhibits CBL-mediated ubiquitination of EGFR. Interacts (via C-terminus) with CAV1 (via C-terminus). In terms of processing, cleaved at Pro-144 by the prolyl endopeptidase FAP (seprase) activity (in vitro).

The protein resides in the cytoplasm. The protein localises to the cytoskeleton. Its subcellular location is the cell projection. It localises to the ruffle membrane. In terms of biological role, antagonist of fibroblast growth factor (FGF) pathways via inhibition of FGF-mediated phosphorylation of ERK1/2. Thereby acts as an antagonist of FGF-induced retinal lens fiber differentiation, may inhibit limb bud outgrowth and may negatively modulate respiratory organogenesis. Inhibits TGFB-induced epithelial-to-mesenchymal transition in retinal lens epithelial cells. Inhibits CBL/C-CBL-mediated EGFR ubiquitination. This Macaca fascicularis (Crab-eating macaque) protein is Protein sprouty homolog 2 (SPRY2).